A 203-amino-acid chain; its full sequence is Peptidoglycan-recognition protein SA (203 aa).

A signal peptide spans 1 to 26 (MQPVRFGSPWIMAIGLVLLLLAFVSA). Disulfide bonds link cysteine 37/cysteine 160 and cysteine 74/cysteine 80. The region spanning 59 to 186 (RPIRYVVIHH…SQVISTQSPG (128 aa)) is the N-acetylmuramoyl-L-alanine amidase domain. 2 peptidoglycan binding regions span residues 87-90 (MQAY) and 97-102 (FNDISY).

This sequence belongs to the N-acetylmuramoyl-L-alanine amidase 2 family. In terms of tissue distribution, in larvae, it is expressed in fat body. Also expressed in uninduced hemocytes and mbn-2 cells.

It is found in the secreted. The enzyme catalyses N-acetyl-D-glucosaminyl-N-acetylmuramoyl-L-alanyl-meso-2,6-diaminoheptanedioyl-D-alanine + H2O = N-acetyl-D-glucosaminyl-N-acetylmuramoyl-L-alanyl-meso-2,6-diaminoheptanedioate + D-alanine. In terms of biological role, peptidoglycan-recognition protein that plays a key role in innate immunity by binding to peptidoglycans (PGN) of Gram-positive bacteria and activating the Toll pathway upstream of spz activating enzyme SPE. Has no activity against Gram-negative bacteria and fungi. Shows some partial redundancy with PRPGP-SD in Gram-positive bacteria recognition. May act by forming a complex with GNBP1 that activates the proteolytic cleavage of Spatzle and the subsequent activation of Toll pathway. Binds to diaminopimelic acid-type tetrapeptide PGN (DAP-type PGN) and lysine-type PGN (Lys-type PGN). Has some L,D-carboxypeptidase activity for DAP-type PGN, which are specific to prokaryotes, but not for Lys-type PGN. In Drosophila melanogaster (Fruit fly), this protein is Peptidoglycan-recognition protein SA (PGRP-SA).